Consider the following 77-residue polypeptide: Small ribosomal subunit protein bS16c (77 aa).

Belongs to the bacterial ribosomal protein bS16 family.

Its subcellular location is the plastid. It localises to the chloroplast. This is Small ribosomal subunit protein bS16c from Eucalyptus globulus subsp. globulus (Tasmanian blue gum).